A 365-amino-acid polypeptide reads, in one-letter code: 3-isopropylmalate dehydrogenase (365 aa).

Residue 80 to 91 participates in NAD(+) binding; that stretch reads GPKWGTGSVRPE. Residues Arg98, Arg108, Arg137, and Asp226 each coordinate substrate. The Mg(2+) site is built by Asp226, Asp251, and Asp255. 290 to 301 lines the NAD(+) pocket; it reads GSAPDLPKGKVN.

It belongs to the isocitrate and isopropylmalate dehydrogenases family. In terms of assembly, homodimer. It depends on Mg(2+) as a cofactor. Mn(2+) serves as cofactor.

The protein resides in the cytoplasm. The enzyme catalyses (2R,3S)-3-isopropylmalate + NAD(+) = 4-methyl-2-oxopentanoate + CO2 + NADH. Its pathway is amino-acid biosynthesis; L-leucine biosynthesis; L-leucine from 3-methyl-2-oxobutanoate: step 3/4. Catalyzes the oxidation of 3-carboxy-2-hydroxy-4-methylpentanoate (3-isopropylmalate) to 3-carboxy-4-methyl-2-oxopentanoate. The product decarboxylates to 4-methyl-2 oxopentanoate. The chain is 3-isopropylmalate dehydrogenase (LEU2) from Maudiozyma exigua (Yeast).